A 264-amino-acid chain; its full sequence is Vitellin-degrading protease (264 aa).

The signal sequence occupies residues methionine 1 to alanine 15. The propeptide at alanine 16–arginine 27 is activation peptide. Residues isoleucine 28–threonine 253 enclose the Peptidase S1 domain. Cysteine 53 and cysteine 69 are oxidised to a cystine. Active-site charge relay system residues include histidine 68 and aspartate 113. Cysteine 178 and cysteine 194 are oxidised to a cystine. Position 203 (aspartate 203) interacts with substrate. Cysteine 205 and cysteine 229 are oxidised to a cystine. The active-site Charge relay system is serine 209. An N-linked (GlcNAc...) asparagine glycan is attached at asparagine 251.

Belongs to the peptidase S1 family. Post-translationally, cleavage after Arg-27 leads to beta-VTN protease and subsequent cleavage after Arg-89 leads to alpha-VTN.

Functionally, responsible for the degradation of vitellin in eggs at the head pigmentation stage. This is Vitellin-degrading protease from Bombyx mori (Silk moth).